A 111-amino-acid chain; its full sequence is Ig kappa chain V-III region PC 7175 (111 aa).

Positions 1 to 23 are framework-1; the sequence is DIVLTQSPASLAVSLGQRATISC. A disulfide bridge connects residues cysteine 23 and cysteine 92. Residues 24-38 are complementarity-determining-1; it reads RASKSVSTSGYSYMH. The tract at residues 39–53 is framework-2; sequence WYQQKPGQPPKLLIY. Positions 54 to 60 are complementarity-determining-2; the sequence is LASNLES. The segment at 61–92 is framework-3; sequence GVPARFSGSGSGTDFTLNIHPVEEEDAATYYC. Residues 93-101 are complementarity-determining-3; the sequence is QHSRELPLT. Residues 102 to 111 form a framework-4 region; the sequence is FGAGTKLELK.

The polypeptide is Ig kappa chain V-III region PC 7175 (Mus musculus (Mouse)).